The primary structure comprises 453 residues: tRNA-2-methylthio-N(6)-dimethylallyladenosine synthase (453 aa).

The region spanning R21–A137 is the MTTase N-terminal domain. Positions 30, 66, 100, 174, 178, and 181 each coordinate [4Fe-4S] cluster. The Radical SAM core domain occupies R160–E389. A TRAM domain is found at K392–I453.

This sequence belongs to the methylthiotransferase family. MiaB subfamily. Monomer. The cofactor is [4Fe-4S] cluster.

The protein localises to the cytoplasm. The enzyme catalyses N(6)-dimethylallyladenosine(37) in tRNA + (sulfur carrier)-SH + AH2 + 2 S-adenosyl-L-methionine = 2-methylsulfanyl-N(6)-dimethylallyladenosine(37) in tRNA + (sulfur carrier)-H + 5'-deoxyadenosine + L-methionine + A + S-adenosyl-L-homocysteine + 2 H(+). Its function is as follows. Catalyzes the methylthiolation of N6-(dimethylallyl)adenosine (i(6)A), leading to the formation of 2-methylthio-N6-(dimethylallyl)adenosine (ms(2)i(6)A) at position 37 in tRNAs that read codons beginning with uridine. The chain is tRNA-2-methylthio-N(6)-dimethylallyladenosine synthase from Bdellovibrio bacteriovorus (strain ATCC 15356 / DSM 50701 / NCIMB 9529 / HD100).